A 193-amino-acid chain; its full sequence is 3-isopropylmalate dehydratase small subunit (193 aa).

Belongs to the LeuD family. LeuD type 1 subfamily. Heterodimer of LeuC and LeuD.

The catalysed reaction is (2R,3S)-3-isopropylmalate = (2S)-2-isopropylmalate. It participates in amino-acid biosynthesis; L-leucine biosynthesis; L-leucine from 3-methyl-2-oxobutanoate: step 2/4. Its function is as follows. Catalyzes the isomerization between 2-isopropylmalate and 3-isopropylmalate, via the formation of 2-isopropylmaleate. This chain is 3-isopropylmalate dehydratase small subunit, found in Listeria innocua serovar 6a (strain ATCC BAA-680 / CLIP 11262).